The primary structure comprises 77 residues: Omega-conotoxin TxVII (77 aa).

A signal peptide spans Met1–Ala22. Positions Asp23–Asn49 are excised as a propeptide. 3 disulfides stabilise this stretch: Cys52/Cys67, Cys59/Cys71, and Cys66/Cys75.

In terms of tissue distribution, expressed by the venom duct.

It localises to the secreted. In terms of biological role, omega-conotoxins act at presynaptic membranes, they bind and block voltage-gated calcium channels (Cav). Specifically acts on L-type channels. It blocks molluscan dihydropyridine-sensitive calcium channels. In Conus textile (Cloth-of-gold cone), this protein is Omega-conotoxin TxVII.